Reading from the N-terminus, the 501-residue chain is MANLRLMITLITVLMITKSSNGIKIDLPKSLNLTLSTDPSIISAASHDFGNITTVTPGGVICPSSTADISRLLQYAANGKSTFQVAARGQGHSLNGQASVSGGVIVNMTCITDVVVSKDKKYADVAAGTLWVDVLKKTAEKGVSPVSWTDYLHITVGGTLSNGGIGGQVFRNGPLVSNVLELDVITGKGEMLTCSRQLNPELFYGVLGGLGQFGIITRARIVLDHAPKRAKWFRMLYSDFTTFTKDQERLISMANDIGVDYLEGQIFLSNGVVDTSFFPPSDQSKVADLVKQHGIIYVLEVAKYYDDPNLPIISKVIDTLTKTLSYLPGFISMHDVAYFDFLNRVHVEENKLRSLGLWELPHPWLNLYVPKSRILDFHNGVVKDILLKQKSASGLALLYPTNRNKWDNRMSAMIPEIDEDVIYIIGLLQSATPKDLPEVESVNEKIIRFCKDSGIKIKQYLMHYTSKEDWIEHFGSKWDDFSKRKDLFDPKKLLSPGQDIF.

A signal peptide spans 1–22 (MANLRLMITLITVLMITKSSNG). N-linked (GlcNAc...) asparagine glycosylation is found at Asn32 and Asn51. Positions 53–226 (TTVTPGGVIC…TRARIVLDHA (174 aa)) constitute an FAD-binding PCMH-type domain. Residues Ala87, Gly89, and Gly91 each contribute to the FAD site. Position 92 is a pros-8alpha-FAD histidine (His92). Residues Ser93 and Gln97 each contribute to the FAD site. N-linked (GlcNAc...) asparagine glycosylation is present at Asn107. Asp150, Thr155, Ser161, Ile165, Ile216, Tyr460, Ser495, and Gln498 together coordinate FAD.

Belongs to the oxygen-dependent FAD-linked oxidoreductase family. FAD serves as cofactor. As to expression, expressed in the shoot apex, in stipules, and occasionally in the most apical part of the inflorescence stems. Not detected in roots.

Its subcellular location is the endoplasmic reticulum. The protein resides in the secreted. It localises to the extracellular space. The catalysed reaction is N(6)-dimethylallyladenine + A + H2O = 3-methyl-2-butenal + adenine + AH2. In terms of biological role, catalyzes the oxidation of cytokinins, a family of N(6)-substituted adenine derivatives that are plant hormones, where the substituent is an isopentenyl group. Modulates asymmetric cytokinin signaling in emerged lateral roots. Its activity determines cell elongation and number in emerged lateral roots and defines angular growth of lateral roots. The protein is Cytokinin dehydrogenase 2 (CKX2) of Arabidopsis thaliana (Mouse-ear cress).